Here is a 415-residue protein sequence, read N- to C-terminus: Beta-1,4-glucuronyltransferase 1 (415 aa).

Topologically, residues 1 to 8 (MQMSYAIR) are cytoplasmic. Residues 9-36 (CAFYQLLLAALMLVAMLQLLYLSLLSGL) form a helical; Signal-anchor for type II membrane protein membrane-spanning segment. The Lumenal segment spans residues 37–415 (HGQEEQDQYF…AKYPNSPRRC (379 aa)). Asn-204 carries an N-linked (GlcNAc...) asparagine glycan. Mn(2+) contacts are provided by Asp-227 and Asp-229. Residue Asn-300 is glycosylated (N-linked (GlcNAc...) asparagine).

Belongs to the glycosyltransferase 49 family. In terms of assembly, interacts with LARGE1 and LARGE2. The cofactor is Mn(2+). As to expression, in the adult, highly expressed in heart, brain, skeletal muscle and kidney and to a lesser extent in placenta, pancreas, spleen, prostate, testis, ovary, small intestine and colon. Very weak expression in lung, liver, thymus and peripheral blood leukocytes. In fetal highly expressed in brain and kidney and to a lesser extent in lung and liver.

The protein resides in the golgi apparatus membrane. The catalysed reaction is 3-O-[beta-D-Xyl-(1-&gt;4)-Rib-ol-P-Rib-ol-P-3-beta-D-GalNAc-(1-&gt;3)-beta-D-GlcNAc-(1-&gt;4)-(O-6-P-alpha-D-Man)]-Thr-[protein] + UDP-alpha-D-glucuronate = 3-O-[beta-D-GlcA-(1-&gt;3)-beta-D-Xyl-(1-&gt;4)-Rib-ol-P-Rib-ol-P-3-beta-D-GalNAc-(1-&gt;3)-beta-D-GlcNAc-(1-&gt;4)-(O-6-P-alpha-D-Man)]-Thr-[protein] + UDP + H(+). The protein operates within protein modification; protein glycosylation. Beta-1,4-glucuronyltransferase involved in O-mannosylation of alpha-dystroglycan (DAG1). Transfers a glucuronic acid (GlcA) residue onto a xylose (Xyl) acceptor to produce the glucuronyl-beta-1,4-xylose-beta disaccharide primer, which is further elongated by LARGE1, during synthesis of phosphorylated O-mannosyl glycan. Phosphorylated O-mannosyl glycan is a carbohydrate structure present in alpha-dystroglycan (DAG1), which is required for binding laminin G-like domain-containing extracellular proteins with high affinity. Required for axon guidance; via its function in O-mannosylation of alpha-dystroglycan (DAG1). This is Beta-1,4-glucuronyltransferase 1 from Homo sapiens (Human).